Consider the following 283-residue polypeptide: Bifunctional protein FolD (283 aa).

Residues 164 to 166 (GRS), S189, and I230 each bind NADP(+).

This sequence belongs to the tetrahydrofolate dehydrogenase/cyclohydrolase family. As to quaternary structure, homodimer.

The catalysed reaction is (6R)-5,10-methylene-5,6,7,8-tetrahydrofolate + NADP(+) = (6R)-5,10-methenyltetrahydrofolate + NADPH. It carries out the reaction (6R)-5,10-methenyltetrahydrofolate + H2O = (6R)-10-formyltetrahydrofolate + H(+). The protein operates within one-carbon metabolism; tetrahydrofolate interconversion. Functionally, catalyzes the oxidation of 5,10-methylenetetrahydrofolate to 5,10-methenyltetrahydrofolate and then the hydrolysis of 5,10-methenyltetrahydrofolate to 10-formyltetrahydrofolate. This chain is Bifunctional protein FolD, found in Pelobacter propionicus (strain DSM 2379 / NBRC 103807 / OttBd1).